The primary structure comprises 130 residues: uncharacterized protein (130 aa).

Positions 1 to 19 (MKVLGNILWWAFVGFMAYA) are cleaved as a signal peptide.

This is an uncharacterized protein from Escherichia coli (strain K12).